The following is a 771-amino-acid chain: Phosphoglycerate kinase (771 aa).

Residues Met-1 to Glu-406 form a phosphoglycerate kinase region. Substrate is bound by residues Asp-20–Asn-22, Arg-35, His-58–Arg-61, Arg-118, and Arg-155. Residues Lys-206, Gly-295, Glu-334, and Gly-361 to Ser-364 contribute to the ATP site. The segment at Gln-407 to Arg-771 is unknown.

In the N-terminal section; belongs to the phosphoglycerate kinase family. As to quaternary structure, monomer.

The protein localises to the cytoplasm. It carries out the reaction (2R)-3-phosphoglycerate + ATP = (2R)-3-phospho-glyceroyl phosphate + ADP. It functions in the pathway carbohydrate degradation; glycolysis; pyruvate from D-glyceraldehyde 3-phosphate: step 2/5. The chain is Phosphoglycerate kinase (pgk) from Mycoplasmopsis pulmonis (strain UAB CTIP) (Mycoplasma pulmonis).